Consider the following 130-residue polypeptide: Protachykinin-1 (130 aa).

An N-terminal signal peptide occupies residues 1-19; that stretch reads MKILVAVAVFFLVSTQLSA. The propeptide occupies 20 to 56; sequence EEIGANDDLNYWSDWSDSDQIKEALPEPFEHILQRIA. Residues Met-68 and Met-107 each carry the methionine amide modification.

It belongs to the tachykinin family. The substance P form is cleaved at Pro-59 by the prolyl endopeptidase FAP (seprase) activity (in vitro). Substance P is also cleaved and degraded by Angiotensin-converting enzyme (ACE) and neprilysin (MME).

It is found in the secreted. In terms of biological role, tachykinins are active peptides which excite neurons, evoke behavioral responses, are potent vasodilators and secretagogues, and contract (directly or indirectly) many smooth muscles. This is Protachykinin-1 (TAC1) from Mesocricetus auratus (Golden hamster).